The chain runs to 420 residues: MPNPSPRYISNLTRDTYALILAGGRGSRLHELTDWRAKPALYFGGKFRIIDFPLSNCINSGIKRIGVVTQYKSHSLIRHLVRGWGHFRKELGESVEILPASQRSSGNWYEGTADAVFQNIDIIRDEIPKYVMILSGDHIYSMDYANILAHHVESGAKMTVSCMPVPIEEAAGAFGVMSVDEDYRILGFEEKPENPTPLPNDPTRCLASMGNYVFDTEFLFEHLKHDAQNEGSERDFGKDIIPSIIKDHPVFAYPFSNDDGEVSYWRDVGTLDSFWLANMELVSPKPPLNLYDKKWPIWTYQEQLPPAKFVWEEYNRCGAAIDSVVSGGCIISGATVRKSLCFSNVHVHSYSEIEESVLLPDVEIKRNCKIKKAIIDRGCIVPEGTVIGHNHDEDRARGFRVTNKGVVLVTREMLGLKVGI.

Alpha-D-glucose 1-phosphate is bound by residues Tyr109, Gly175, 190–191 (EK), and Ser208.

The protein belongs to the bacterial/plant glucose-1-phosphate adenylyltransferase family. As to quaternary structure, homotetramer.

It carries out the reaction alpha-D-glucose 1-phosphate + ATP + H(+) = ADP-alpha-D-glucose + diphosphate. It functions in the pathway glycan biosynthesis; glycogen biosynthesis. Its function is as follows. Involved in the biosynthesis of ADP-glucose, a building block required for the elongation reactions to produce glycogen. Catalyzes the reaction between ATP and alpha-D-glucose 1-phosphate (G1P) to produce pyrophosphate and ADP-Glc. This Pseudoalteromonas atlantica (strain T6c / ATCC BAA-1087) protein is Glucose-1-phosphate adenylyltransferase 2.